Here is a 257-residue protein sequence, read N- to C-terminus: NAD-capped RNA hydrolase NudC (257 aa).

Lys25 and Arg69 together coordinate substrate. Positions 98 and 101 each coordinate Zn(2+). Substrate is bound at residue Glu111. Residues Cys116 and Cys119 each contribute to the Zn(2+) site. Residue Tyr124 participates in substrate binding. In terms of domain architecture, Nudix hydrolase spans 125-248; sequence PQIAPCIIVA…TVARRLIEDT (124 aa). A divalent metal cation contacts are provided by Ala158, Glu174, and Glu178. Positions 159–180 match the Nudix box motif; it reads GFVEVGETLEQAVAREVMEESG. 192-199 serves as a coordination point for substrate; the sequence is QPWPFPQS. Glu219 lines the a divalent metal cation pocket. Ala241 contributes to the substrate binding site.

It belongs to the Nudix hydrolase family. NudC subfamily. As to quaternary structure, homodimer. It depends on Mg(2+) as a cofactor. Mn(2+) is required as a cofactor. The cofactor is Zn(2+).

The enzyme catalyses a 5'-end NAD(+)-phospho-ribonucleoside in mRNA + H2O = a 5'-end phospho-adenosine-phospho-ribonucleoside in mRNA + beta-nicotinamide D-ribonucleotide + 2 H(+). The catalysed reaction is NAD(+) + H2O = beta-nicotinamide D-ribonucleotide + AMP + 2 H(+). It carries out the reaction NADH + H2O = reduced beta-nicotinamide D-ribonucleotide + AMP + 2 H(+). Functionally, mRNA decapping enzyme that specifically removes the nicotinamide adenine dinucleotide (NAD) cap from a subset of mRNAs by hydrolyzing the diphosphate linkage to produce nicotinamide mononucleotide (NMN) and 5' monophosphate mRNA. The NAD-cap is present at the 5'-end of some mRNAs and stabilizes RNA against 5'-processing. Has preference for mRNAs with a 5'-end purine. Catalyzes the hydrolysis of a broad range of dinucleotide pyrophosphates. In Escherichia coli O157:H7, this protein is NAD-capped RNA hydrolase NudC.